Consider the following 605-residue polypeptide: Sodium-independent sulfate anion transporter (605 aa).

Residues 1-50 are Extracellular-facing; the sequence is MPSSLKGLGQAWLSSSSMALSACCSVSAWQKRLPVLAWLPRYSLQWLKMD. A helical transmembrane segment spans residues 51–71; the sequence is FIAGLSVGLTVIPQALAYAEV. A topological domain (cytoplasmic) is located at residue Ala72. The helical transmembrane segment at 73–93 threads the bilayer; sequence GLPPQYGLYSAFTGCFVYVFL. The Extracellular portion of the chain corresponds to 94 to 98; the sequence is GTSRD. The helical transmembrane segment at 99–119 threads the bilayer; it reads VTLGPTAIMSLLVSFYTFHEP. Over 120 to 122 the chain is Cytoplasmic; that stretch reads AYA. The chain crosses the membrane as a helical span at residues 123–143; it reads VLLTFLSGCIQLAMGLLHLGF. Topologically, residues 144-146 are extracellular; that stretch reads LLD. The helical transmembrane segment at 147-167 threads the bilayer; it reads FISCPVIKGFTSAAAIIIGFG. The Cytoplasmic portion of the chain corresponds to 168-196; the sequence is QIKNLLGLHNIPRQFFLQVYHTFLSVGET. Residues 197–217 form a helical membrane-spanning segment; the sequence is RLGDAILGLVCMVLLLVLKLM. Residues 218-249 lie on the Extracellular side of the membrane; sequence RDRIPPVHPEMPLCVRLSCGLVWTTATARNAL. Residues 250–270 form a helical membrane-spanning segment; it reads VVSFAALVAYSFEVTGYQPFI. The Cytoplasmic segment spans residues 271 to 303; that stretch reads LTGEIAKGLPPVRVPPFSVTMANGTVSFTRMVQ. Residues 304–324 traverse the membrane as a helical segment; it reads DLGAGLAVVPLIGLLESIAVA. At 325–340 the chain is on the extracellular side; the sequence is KAFASQNDYHVDANQE. A helical membrane pass occupies residues 341-361; that stretch reads LLAIGLTNMLGSFVSSYPITG. Topologically, residues 362 to 373 are cytoplasmic; it reads SFGRTAVNAQSG. A helical membrane pass occupies residues 374–394; sequence VCTPAGGLVTGALVLLSLDYL. The Extracellular segment spans residues 395-397; it reads TSL. The helical transmembrane segment at 398-418 threads the bilayer; sequence FYYIPKAALAAVIIMAVVPLF. The Cytoplasmic segment spans residues 419–447; the sequence is DTKIFGMLWRVKRLDLLPLCATFLLCFWE. Residues 448-468 traverse the membrane as a helical segment; sequence VQYGILAGTLVSTLFLLHFVA. Residues 469 to 605 are Extracellular-facing; that stretch reads RPKTQVSEGP…PEHKVTLLTA (137 aa). Residues 479 to 582 form the STAS domain; it reads VLILQLASGL…EKAEQYVRQE (104 aa).

The protein belongs to the SLC26A/SulP transporter (TC 2.A.53) family.

It localises to the cell membrane. The protein localises to the lysosome membrane. It is found in the apical cell membrane. The protein resides in the basolateral cell membrane. The enzyme catalyses hydrogencarbonate(in) + chloride(out) = hydrogencarbonate(out) + chloride(in). It catalyses the reaction sulfate(in) + H(+)(in) = sulfate(out) + H(+)(out). It carries out the reaction oxalate(in) + chloride(out) = oxalate(out) + chloride(in). In terms of biological role, sodium-independent anion exchanger mediating bicarbonate, chloride, sulfate and oxalate transport. Exhibits sodium-independent sulfate anion transporter activity that may cooperate with SLC26A2 to mediate DIDS-sensitive sulfate uptake into high endothelial venules endothelial cells (HEVEC). In the kidney, mediates chloride-bicarbonate exchange, facilitating V-ATPase-mediated acid secretion. May function as a chloride channel, playing an important role in moderating chloride homeostasis and neuronal activity in the cerebellum. This Cavia porcellus (Guinea pig) protein is Sodium-independent sulfate anion transporter (Slc26a11).